Consider the following 592-residue polypeptide: 2-succinyl-5-enolpyruvyl-6-hydroxy-3-cyclohexene-1-carboxylate synthase (592 aa).

This sequence belongs to the TPP enzyme family. MenD subfamily. In terms of assembly, homodimer. It depends on Mg(2+) as a cofactor. Requires Mn(2+) as cofactor. Thiamine diphosphate serves as cofactor.

It catalyses the reaction isochorismate + 2-oxoglutarate + H(+) = 5-enolpyruvoyl-6-hydroxy-2-succinyl-cyclohex-3-ene-1-carboxylate + CO2. It participates in quinol/quinone metabolism; 1,4-dihydroxy-2-naphthoate biosynthesis; 1,4-dihydroxy-2-naphthoate from chorismate: step 2/7. It functions in the pathway quinol/quinone metabolism; menaquinone biosynthesis. Functionally, catalyzes the thiamine diphosphate-dependent decarboxylation of 2-oxoglutarate and the subsequent addition of the resulting succinic semialdehyde-thiamine pyrophosphate anion to isochorismate to yield 2-succinyl-5-enolpyruvyl-6-hydroxy-3-cyclohexene-1-carboxylate (SEPHCHC). The polypeptide is 2-succinyl-5-enolpyruvyl-6-hydroxy-3-cyclohexene-1-carboxylate synthase (Leifsonia xyli subsp. xyli (strain CTCB07)).